The sequence spans 278 residues: Orotidine 5'-phosphate decarboxylase (278 aa).

Substrate contacts are provided by residues Asp-40, 62–64 (KTH), 93–102 (DRKFIDIGNT), Tyr-229, and Arg-247. The active-site Proton donor is Lys-95.

The protein belongs to the OMP decarboxylase family.

The enzyme catalyses orotidine 5'-phosphate + H(+) = UMP + CO2. The protein operates within pyrimidine metabolism; UMP biosynthesis via de novo pathway; UMP from orotate: step 2/2. This Aspergillus fumigatus (strain ATCC MYA-4609 / CBS 101355 / FGSC A1100 / Af293) (Neosartorya fumigata) protein is Orotidine 5'-phosphate decarboxylase (pyrG).